Here is a 27-residue protein sequence, read N- to C-terminus: Protein YqfI (27 aa).

The chain is Protein YqfI from Escherichia coli (strain K12).